We begin with the raw amino-acid sequence, 179 residues long: Large ribosomal subunit protein uL5 (179 aa).

The protein belongs to the universal ribosomal protein uL5 family. As to quaternary structure, part of the 50S ribosomal subunit; part of the 5S rRNA/L5/L18/L25 subcomplex. Contacts the 5S rRNA and the P site tRNA. Forms a bridge to the 30S subunit in the 70S ribosome.

In terms of biological role, this is one of the proteins that bind and probably mediate the attachment of the 5S RNA into the large ribosomal subunit, where it forms part of the central protuberance. In the 70S ribosome it contacts protein S13 of the 30S subunit (bridge B1b), connecting the 2 subunits; this bridge is implicated in subunit movement. Contacts the P site tRNA; the 5S rRNA and some of its associated proteins might help stabilize positioning of ribosome-bound tRNAs. The chain is Large ribosomal subunit protein uL5 from Microcystis aeruginosa (strain NIES-843 / IAM M-2473).